Consider the following 1344-residue polypeptide: MMEVKAAELVAALKNSNMSVDTKVAHLQCVKSDIKQKNVPEGAVPSIFESIRLAIASQHSSLSGAGFSTLGHFLKRLLIQELHHLVALQCRALYPLLVERLGDHKERIRAQAAQSFTDMWLAAPEEVEQCVLGQALVGKNPRAKEMSMIWLSNVSSSFNIGGFSSFLTIALQMTKNYGLLFRSYVSSLVACLEDADSNVRNTAKNTVIELFENASERAKSDLKRQMATHNVRKSFVNAILASIDHGTSDMDAASRPISRAEALVHRPVSRAETQASRSVSRLDTHQRPASRMELAQSSVLHTEALPPRPVSVLSSRSETHKEVTKEVIGVERPKSRLTTAKSEPNWAVVSHTGPAEELPLPSSRPASQEGEKIDALYVSSSRQVDELFRDMMPHFEGRESEDNWIRREKDVLTLRRLTHGNAPDDYSPAYLAGLKTLLDGIFKVVNSLRTTLSTIGCLLIQDIAKRCGPRIDSMVEIMMQNLIKLCSGMKKISAQNGNATVDALIENVTFTTRILQHVSGACQDKNVQLRLFAAGWLKTLIQKQSHHKSSIEHGGGLDMMEKSVKKCLADANPGVREAMRSTFWTYYRVWPNRANEILSNLDPKSRSLLEKDPANPNAHQSAPKDSGPSRKGLANGTSSLAGRSALKEAIAAQKKARLAPAKAVPPPRPESAQSALSDKHSSAPSSSKSSVRTVPTGTSLSSLSSAPVRPAAKPRRPELNRPATADPYAARRSVATDSSTRHGNQIDGSPSAAKSKSSTPSLKSVSSTGSRDRADPVGTTRDRPKRLVISKTRSHDTHTRQHSKPIPTHSRKNSNESIPRHSPLRSEFSVTPISPNSVSLETPSTPRSHLVQDHGNLIAIASPPTHIQRTPIEPDASAEDPREHAAKATPVAIFEDTTPARSDHDDIQDAAMTLTENQTPQPSKVHSDSPIVSNKRVSNQDESVPHLTTGLGFLTGVGSVVEASELPNSDAQTDQSLFADHSLPVTHQPDSVTDSSKPSGLSSSLMVAGSPIRVANNENEIVIDSKTTHVSLPHRSSPKHNVLGELTSNEPSQRANKQIRHAANKLEDEVTTPIDDHSRHRWKKVEIADRRTSISPRSKDPTKAQQMLDKGIQRIRTKTMDILGYRKLQGIIKYHDSIFTNEEKYDEMLLALLDELESSPDDKRQPLGRPLDLKTQVLLTIRLMLIHNKIYFSAYCSRALGALVLARKYYDANCHIVSGLEETADDIIALCEPAAVIDSVLDVIITEEKDDREYRSILMGVSVLTRILSRLNADKCRVPELPLDRLGQFAASKLADRQPDVRRLAVQLCVQLHGMVANEEEYWRVLGHPRENSRNLLTYYILKK.

The stretch at 93–131 (LYPLLVERLGDHKERIRAQAAQSFTDMWLAAPEEVEQCV) is one HEAT 1 repeat. Residues 265-292 (HRPVSRAETQASRSVSRLDTHQRPASRM) form a disordered region. The stretch at 508–544 (VTFTTRILQHVSGACQDKNVQLRLFAAGWLKTLIQKQ) is one HEAT 2 repeat. Disordered stretches follow at residues 606-637 (RSLL…ANGT), 651-847 (AAQK…STPR), 914-945 (LTEN…ESVP), 984-1004 (PVTH…LSSS), and 1031-1054 (SLPH…PSQR). Composition is skewed to polar residues over residues 691–705 (VRTV…SLSS) and 735–747 (ATDS…NQID). Positions 748–769 (GSPSAAKSKSSTPSLKSVSSTG) are enriched in low complexity. Polar residues-rich tracts occupy residues 828–847 (FSVT…STPR) and 914–942 (LTEN…NQDE). Over residues 995 to 1004 (SSKPSGLSSS) the composition is skewed to low complexity.

It belongs to the CLASP family. In terms of assembly, interacts with microtubules.

The protein resides in the cytoplasm. It localises to the cytoskeleton. Its subcellular location is the nucleus. The protein localises to the spindle. Microtubule binding protein that promotes the stabilization of dynamic microtubules. Required for mitotic spindle formation. This is Protein stu1 (stu1) from Aspergillus fumigatus (strain ATCC MYA-4609 / CBS 101355 / FGSC A1100 / Af293) (Neosartorya fumigata).